The primary structure comprises 269 residues: Formamidopyrimidine-DNA glycosylase (269 aa).

Pro-2 serves as the catalytic Schiff-base intermediate with DNA. Glu-3 functions as the Proton donor in the catalytic mechanism. Lys-57 (proton donor; for beta-elimination activity) is an active-site residue. DNA-binding residues include His-90, Arg-109, and Lys-150. The FPG-type zinc finger occupies 235 to 269; it reads QVYGKGGLPCPKCGTELAEVKIGQRATVYCSQCQQ. The Proton donor; for delta-elimination activity role is filled by Arg-259.

The protein belongs to the FPG family. Monomer. The cofactor is Zn(2+).

It carries out the reaction Hydrolysis of DNA containing ring-opened 7-methylguanine residues, releasing 2,6-diamino-4-hydroxy-5-(N-methyl)formamidopyrimidine.. It catalyses the reaction 2'-deoxyribonucleotide-(2'-deoxyribose 5'-phosphate)-2'-deoxyribonucleotide-DNA = a 3'-end 2'-deoxyribonucleotide-(2,3-dehydro-2,3-deoxyribose 5'-phosphate)-DNA + a 5'-end 5'-phospho-2'-deoxyribonucleoside-DNA + H(+). Involved in base excision repair of DNA damaged by oxidation or by mutagenic agents. Acts as a DNA glycosylase that recognizes and removes damaged bases. Has a preference for oxidized purines, such as 7,8-dihydro-8-oxoguanine (8-oxoG). Has AP (apurinic/apyrimidinic) lyase activity and introduces nicks in the DNA strand. Cleaves the DNA backbone by beta-delta elimination to generate a single-strand break at the site of the removed base with both 3'- and 5'-phosphates. This chain is Formamidopyrimidine-DNA glycosylase, found in Photobacterium damsela subsp. piscicida (Pasteurella piscicida).